Here is a 234-residue protein sequence, read N- to C-terminus: UPF0502 protein Bphy_5360 (234 aa).

It belongs to the UPF0502 family.

This Paraburkholderia phymatum (strain DSM 17167 / CIP 108236 / LMG 21445 / STM815) (Burkholderia phymatum) protein is UPF0502 protein Bphy_5360.